The chain runs to 84 residues: Cell division topological specificity factor (84 aa).

Belongs to the MinE family.

In terms of biological role, prevents the cell division inhibition by proteins MinC and MinD at internal division sites while permitting inhibition at polar sites. This ensures cell division at the proper site by restricting the formation of a division septum at the midpoint of the long axis of the cell. The sequence is that of Cell division topological specificity factor from Chromohalobacter salexigens (strain ATCC BAA-138 / DSM 3043 / CIP 106854 / NCIMB 13768 / 1H11).